Here is a 145-residue protein sequence, read N- to C-terminus: SsrA-binding protein (145 aa).

Belongs to the SmpB family.

The protein resides in the cytoplasm. Its function is as follows. Required for rescue of stalled ribosomes mediated by trans-translation. Binds to transfer-messenger RNA (tmRNA), required for stable association of tmRNA with ribosomes. tmRNA and SmpB together mimic tRNA shape, replacing the anticodon stem-loop with SmpB. tmRNA is encoded by the ssrA gene; the 2 termini fold to resemble tRNA(Ala) and it encodes a 'tag peptide', a short internal open reading frame. During trans-translation Ala-aminoacylated tmRNA acts like a tRNA, entering the A-site of stalled ribosomes, displacing the stalled mRNA. The ribosome then switches to translate the ORF on the tmRNA; the nascent peptide is terminated with the 'tag peptide' encoded by the tmRNA and targeted for degradation. The ribosome is freed to recommence translation, which seems to be the essential function of trans-translation. This chain is SsrA-binding protein, found in Mycoplasmopsis pulmonis (strain UAB CTIP) (Mycoplasma pulmonis).